A 300-amino-acid polypeptide reads, in one-letter code: Bifunctional protein FolD 2 (300 aa).

NADP(+) contacts are provided by residues 165-167 (GRS), Ser190, and Ile231.

The protein belongs to the tetrahydrofolate dehydrogenase/cyclohydrolase family. As to quaternary structure, homodimer.

The catalysed reaction is (6R)-5,10-methylene-5,6,7,8-tetrahydrofolate + NADP(+) = (6R)-5,10-methenyltetrahydrofolate + NADPH. The enzyme catalyses (6R)-5,10-methenyltetrahydrofolate + H2O = (6R)-10-formyltetrahydrofolate + H(+). It functions in the pathway one-carbon metabolism; tetrahydrofolate interconversion. Functionally, catalyzes the oxidation of 5,10-methylenetetrahydrofolate to 5,10-methenyltetrahydrofolate and then the hydrolysis of 5,10-methenyltetrahydrofolate to 10-formyltetrahydrofolate. This Pseudomonas syringae pv. syringae (strain B728a) protein is Bifunctional protein FolD 2.